A 156-amino-acid chain; its full sequence is ATP synthase subunit b (156 aa).

Residues 11–31 traverse the membrane as a helical segment; it reads LIAFALFVWFCMKFVWPPIIN.

The protein belongs to the ATPase B chain family. F-type ATPases have 2 components, F(1) - the catalytic core - and F(0) - the membrane proton channel. F(1) has five subunits: alpha(3), beta(3), gamma(1), delta(1), epsilon(1). F(0) has three main subunits: a(1), b(2) and c(10-14). The alpha and beta chains form an alternating ring which encloses part of the gamma chain. F(1) is attached to F(0) by a central stalk formed by the gamma and epsilon chains, while a peripheral stalk is formed by the delta and b chains.

It localises to the cell inner membrane. Functionally, f(1)F(0) ATP synthase produces ATP from ADP in the presence of a proton or sodium gradient. F-type ATPases consist of two structural domains, F(1) containing the extramembraneous catalytic core and F(0) containing the membrane proton channel, linked together by a central stalk and a peripheral stalk. During catalysis, ATP synthesis in the catalytic domain of F(1) is coupled via a rotary mechanism of the central stalk subunits to proton translocation. Its function is as follows. Component of the F(0) channel, it forms part of the peripheral stalk, linking F(1) to F(0). This Haemophilus influenzae (strain 86-028NP) protein is ATP synthase subunit b.